The following is a 248-amino-acid chain: Isopentenyl phosphate kinase (248 aa).

ATP is bound at residue 7–11; that stretch reads KLGGS. Residue glycine 49 coordinates substrate. Glycine 50 contacts ATP. Substrate contacts are provided by histidine 54 and glycine 152. The ATP site is built by glycine 209 and lysine 213.

Belongs to the isopentenyl phosphate kinase family. Homodimer.

It catalyses the reaction isopentenyl phosphate + ATP = isopentenyl diphosphate + ADP. Functionally, catalyzes the phosphorylation of isopentenyl phosphate (IP) to isopentenyl diphosphate (IPP). Functions in an alternate mevalonate (MVA) pathway leading to IPP, a key precursor for the biosynthesis of isoprenoid compounds such as archaeal membrane lipids. This is Isopentenyl phosphate kinase from Haloferax volcanii (strain ATCC 29605 / DSM 3757 / JCM 8879 / NBRC 14742 / NCIMB 2012 / VKM B-1768 / DS2) (Halobacterium volcanii).